The following is a 478-amino-acid chain: Cytochrome P450 monooxygenase asqL (478 aa).

Cys-407 serves as a coordination point for heme.

Belongs to the cytochrome P450 family. It depends on heme as a cofactor.

Its pathway is secondary metabolite biosynthesis. The protein operates within alkaloid biosynthesis. It participates in mycotoxin biosynthesis. Cytochrome P450 monooxygenase; part of the gene cluster that mediates the biosynthesis of the aspoquinolone mycotoxins. The role of asqL within the aspoquinolone pathway has still to be determined. The first step of the pathway is catalyzed by the nonribosomal peptide synthetase asqK that condenses anthranilic acid and O-methyl-L-tyrosine to produce 4'-methoxycyclopeptin. 4'-methoxycyclopeptin is then converted to 4'-methoxydehydrocyclopeptin by the ketoglutarate-dependent dioxygenase asqJ. AsqJ also converts its first product 4'-methoxydehydrocyclopeptin to 4'-methoxycyclopenin. The following conversion of 4'-methoxycyclopenin into 4'-methoxyviridicatin is catalyzed by the cyclopenase asqI. 4'-methoxyviridicatin is the precursor of quinolone natural products, and is further converted to quinolinone B. The prenyltransferase asqH1 then catalyzes the canonical Friedel-Crafts alkylation of quinolinone B with dimethylallyl cation to yield dimethylallyl quinolone, which is subjected to FAD-dependent dehydrogenation by the FAD-linked oxidoreductase asqF to yield conjugated aryl diene. The delta(3') double bond then serves as the site of the second alkylation with DMAPP catalyzed by the prenyltransferase asqH2 to yield a carbenium ion intermediate, which can be attacked by H(2)O to yield a styrenyl quinolone containing a C3'-hydroxyprenyl chain. The FAD-dependent monooxygenase asqG performs epoxidation of the terminal C7'-C8' olefin. Finally, after dehydratation of the epoxide at C3 by asqC, the quinolone epoxide rearrangement protein asqO catalyzes an enzymatic 3-exo-tet cyclization to yield the cyclopropyl-THF ring system in aspoquinolone. This chain is Cytochrome P450 monooxygenase asqL, found in Emericella nidulans (strain FGSC A4 / ATCC 38163 / CBS 112.46 / NRRL 194 / M139) (Aspergillus nidulans).